Here is a 258-residue protein sequence, read N- to C-terminus: MARILITGSTDGFGLEAARQLVDRKHVVYLHARSQERAEEVKTKCPGAAGVLVADLTSVAETRKLAEEANAIGTFDAIILNAGLLYGPFRKTDYGVPAMPFVNVLAPYILSCLLEQPKRLIFIASILHKEAKTDLKDIFWLERGEKEFQDFPAYCDSKFHVMLLANAVAKRFKGTSVTSVHPGYVATKLGGSGATDKMEDGVETYVMLAEGDYDQSLTGVYFVPKKQIGEPLPETTQEDLQETVVKACEDITGIKLPA.

NADP(+) is bound by residues Arg37, Asp55, Asn81, Tyr154, Lys158, Val185, and Thr187. The active-site Proton donor is the Tyr154. The active-site Lowers pKa of active site Tyr is the Lys158.

The protein belongs to the short-chain dehydrogenases/reductases (SDR) family.

In terms of biological role, short-chain dehydrogenase; part of the gene cluster that mediates the biosynthesis of the yellow pigment chrysogine. the NRPS chyA mediates the condensation of anthranilic acid and alanine into the intermediate 2-(2-aminopropanamido)benzoic acid. The remainder of the pathway is highly branched yielding at least 13 chrysogine-related compounds. The malonyl transferase chyE converts 2-(2-aminopropanamido)benzoic acid and 2-(2-aminopropanamido)benzamidine into 2-(2-(2-carboxyacetamido)propanamido)benzoic acid and 3-((1-((2-carbamoylphenyl)amino)-1-oxopropan-2-yl)amino)-3-oxopropanoic acid, respectively. ChyD is an amidase, being responsible for the amidation of the carboxylic acid moiety of 2-(2-aminopropanamido)benzoic acid, 2-(2-(2-carboxyacetamido)propanamido)benzoic acid and 2-(2-((4-amino-1-carboxy-4-oxobutyl)amino)propanamido)benzoic acid. ChyC is involved in the same reactions as ChyD, but plays a more minor role in the amidation reactions compared to chyD. The oxidoreductases chyH and chyM are involved in oxidation reactions that form N-pyruvoylanthranilamide from 2-(2-aminopropanamido)benzamidine and (1-((2-carbamoylphenyl)amino)-1-oxopropan-2-yl)glutamine, respectively. N-pyruvoylanthranilamide is further converted via two further branches in the pathway, yielding chrysogine and additional chrysogine-related coumpounds. Chrysogine is likely formed by a spontaneous ring closure from N-pyruvoylanthranilamide. The chain is Short-chain dehydrogenase chyC from Penicillium rubens (strain ATCC 28089 / DSM 1075 / NRRL 1951 / Wisconsin 54-1255) (Penicillium chrysogenum).